The chain runs to 910 residues: Protein translocase subunit SecA (910 aa).

ATP is bound by residues Q87, 105–109 (GEGKT), and D501. Zn(2+) contacts are provided by C894, C896, C905, and H906.

The protein belongs to the SecA family. In terms of assembly, monomer and homodimer. Part of the essential Sec protein translocation apparatus which comprises SecA, SecYEG and auxiliary proteins SecDF-YajC and YidC. Requires Zn(2+) as cofactor.

It localises to the cell inner membrane. Its subcellular location is the cytoplasm. It carries out the reaction ATP + H2O + cellular proteinSide 1 = ADP + phosphate + cellular proteinSide 2.. Functionally, part of the Sec protein translocase complex. Interacts with the SecYEG preprotein conducting channel. Has a central role in coupling the hydrolysis of ATP to the transfer of proteins into and across the cell membrane, serving both as a receptor for the preprotein-SecB complex and as an ATP-driven molecular motor driving the stepwise translocation of polypeptide chains across the membrane. The chain is Protein translocase subunit SecA from Acidiphilium cryptum (strain JF-5).